We begin with the raw amino-acid sequence, 486 residues long: ATP synthase subunit beta (486 aa).

167 to 174 contributes to the ATP binding site; it reads GGAGVGKT.

This sequence belongs to the ATPase alpha/beta chains family. As to quaternary structure, F-type ATPases have 2 components, CF(1) - the catalytic core - and CF(0) - the membrane proton channel. CF(1) has five subunits: alpha(3), beta(3), gamma(1), delta(1), epsilon(1). CF(0) has three main subunits: a(1), b(2) and c(9-12). The alpha and beta chains form an alternating ring which encloses part of the gamma chain. CF(1) is attached to CF(0) by a central stalk formed by the gamma and epsilon chains, while a peripheral stalk is formed by the delta and b chains.

It localises to the cell inner membrane. It catalyses the reaction ATP + H2O + 4 H(+)(in) = ADP + phosphate + 5 H(+)(out). Produces ATP from ADP in the presence of a proton gradient across the membrane. The catalytic sites are hosted primarily by the beta subunits. In Anaplasma marginale (strain St. Maries), this protein is ATP synthase subunit beta.